Reading from the N-terminus, the 315-residue chain is 4-hydroxy-3-methylbut-2-enyl diphosphate reductase (315 aa).

Residue C12 coordinates [4Fe-4S] cluster. Residues H41 and H74 each coordinate (2E)-4-hydroxy-3-methylbut-2-enyl diphosphate. Dimethylallyl diphosphate contacts are provided by H41 and H74. 2 residues coordinate isopentenyl diphosphate: H41 and H74. C96 lines the [4Fe-4S] cluster pocket. H124 is a binding site for (2E)-4-hydroxy-3-methylbut-2-enyl diphosphate. A dimethylallyl diphosphate-binding site is contributed by H124. H124 is a binding site for isopentenyl diphosphate. E126 functions as the Proton donor in the catalytic mechanism. Residue T168 participates in (2E)-4-hydroxy-3-methylbut-2-enyl diphosphate binding. C198 lines the [4Fe-4S] cluster pocket. (2E)-4-hydroxy-3-methylbut-2-enyl diphosphate is bound by residues S226, S227, N228, and S270. Dimethylallyl diphosphate contacts are provided by S226, S227, N228, and S270. S226, S227, N228, and S270 together coordinate isopentenyl diphosphate.

This sequence belongs to the IspH family. Requires [4Fe-4S] cluster as cofactor.

It catalyses the reaction isopentenyl diphosphate + 2 oxidized [2Fe-2S]-[ferredoxin] + H2O = (2E)-4-hydroxy-3-methylbut-2-enyl diphosphate + 2 reduced [2Fe-2S]-[ferredoxin] + 2 H(+). The catalysed reaction is dimethylallyl diphosphate + 2 oxidized [2Fe-2S]-[ferredoxin] + H2O = (2E)-4-hydroxy-3-methylbut-2-enyl diphosphate + 2 reduced [2Fe-2S]-[ferredoxin] + 2 H(+). The protein operates within isoprenoid biosynthesis; dimethylallyl diphosphate biosynthesis; dimethylallyl diphosphate from (2E)-4-hydroxy-3-methylbutenyl diphosphate: step 1/1. It participates in isoprenoid biosynthesis; isopentenyl diphosphate biosynthesis via DXP pathway; isopentenyl diphosphate from 1-deoxy-D-xylulose 5-phosphate: step 6/6. Functionally, catalyzes the conversion of 1-hydroxy-2-methyl-2-(E)-butenyl 4-diphosphate (HMBPP) into a mixture of isopentenyl diphosphate (IPP) and dimethylallyl diphosphate (DMAPP). Acts in the terminal step of the DOXP/MEP pathway for isoprenoid precursor biosynthesis. This is 4-hydroxy-3-methylbut-2-enyl diphosphate reductase from Azotobacter vinelandii (strain DJ / ATCC BAA-1303).